Reading from the N-terminus, the 188-residue chain is MKTAQEIRAGNVVMIGTEPMVVQKAEFNKSGRNSAVVKMKLKGLLNGSATETVFKADDKLDVVQLERKECTYSYFSDPLYVFMDTEYNQYDVEKDNLGDVLNYLVDGMEDICEVTFYNEKAISVELPTTIVREVEYTEPAARGDTSGKVTKPARLKGTAYELAVAAFVEIGDKIEIDSRTGEFKRRLS.

The protein belongs to the elongation factor P family.

Its subcellular location is the cytoplasm. It participates in protein biosynthesis; polypeptide chain elongation. Functionally, involved in peptide bond synthesis. Stimulates efficient translation and peptide-bond synthesis on native or reconstituted 70S ribosomes in vitro. Probably functions indirectly by altering the affinity of the ribosome for aminoacyl-tRNA, thus increasing their reactivity as acceptors for peptidyl transferase. In Aeromonas salmonicida (strain A449), this protein is Elongation factor P.